The following is a 391-amino-acid chain: Fructose-bisphosphate aldolase 3, chloroplastic (391 aa).

A chloroplast-targeting transit peptide spans 1-40; sequence MASASFVKPNTLSSPWIGQRSFAHTSASSSPPPRVSFAIR. Arg88 serves as a coordination point for substrate. Residue Ser150 is modified to Phosphoserine. Lys178 contributes to the substrate binding site. Residue Ser208 is modified to Phosphoserine. The Proton acceptor role is filled by Glu218. Lys260 (schiff-base intermediate with dihydroxyacetone-P) is an active-site residue. 302-304 provides a ligand contact to substrate; that stretch reads SGG. Lys387 is modified (N6,N6,N6-trimethyllysine).

This sequence belongs to the class I fructose-bisphosphate aldolase family. In terms of assembly, homotetramer. Can be trimethylated at Lys-387 by LSMT-L, but the trimethylation has no effect in vitro. In terms of processing, S-glutathionylated. Expressed in roots, and at low levels in rosettes leaves, cauline leaves, stems and flowers.

It localises to the plastid. Its subcellular location is the chloroplast. It is found in the plastoglobule. It carries out the reaction beta-D-fructose 1,6-bisphosphate = D-glyceraldehyde 3-phosphate + dihydroxyacetone phosphate. Its pathway is carbohydrate degradation; glycolysis; D-glyceraldehyde 3-phosphate and glycerone phosphate from D-glucose: step 4/4. Its function is as follows. Plays a key role in glycolysis and gluconeogenesis. This is Fructose-bisphosphate aldolase 3, chloroplastic from Arabidopsis thaliana (Mouse-ear cress).